The primary structure comprises 147 residues: 3-dehydroquinate dehydratase (147 aa).

The active-site Proton acceptor is the Tyr23. Residues Asn75, His81, and Asp88 each coordinate substrate. Residue His101 is the Proton donor of the active site. Substrate-binding positions include 102–103 and Arg112; that span reads LS.

Belongs to the type-II 3-dehydroquinase family. In terms of assembly, homododecamer.

It carries out the reaction 3-dehydroquinate = 3-dehydroshikimate + H2O. It functions in the pathway metabolic intermediate biosynthesis; chorismate biosynthesis; chorismate from D-erythrose 4-phosphate and phosphoenolpyruvate: step 3/7. Functionally, catalyzes a trans-dehydration via an enolate intermediate. This is 3-dehydroquinate dehydratase from Stenotrophomonas maltophilia (strain K279a).